We begin with the raw amino-acid sequence, 349 residues long: Palmitoyltransferase PFA5 (349 aa).

The next 2 helical transmembrane spans lie at 19–39 and 57–77; these read LIPF…CHQF and LIIV…LMLV. A DHHC domain is found at 126 to 176; that stretch reads IWCSNCQSLKMSRTHHSTKVGYCVPRFDHYCVWIGTVLGRLNYKLFVQFTF. The active-site S-palmitoyl cysteine intermediate is the Cys-156. 2 consecutive transmembrane segments (helical) span residues 170–190 and 204–224; these read LFVQ…ISIA and VYAV…LFLT.

The protein belongs to the DHHC palmitoyltransferase family. PFA5 subfamily.

The protein resides in the membrane. It carries out the reaction L-cysteinyl-[protein] + hexadecanoyl-CoA = S-hexadecanoyl-L-cysteinyl-[protein] + CoA. This Kluyveromyces lactis (strain ATCC 8585 / CBS 2359 / DSM 70799 / NBRC 1267 / NRRL Y-1140 / WM37) (Yeast) protein is Palmitoyltransferase PFA5 (PFA5).